Consider the following 121-residue polypeptide: Phospholipase A2 homolog EPL_00195 (121 aa).

Cystine bridges form between cysteine 25-cysteine 114, cysteine 27-cysteine 43, cysteine 42-cysteine 94, cysteine 48-cysteine 121, cysteine 49-cysteine 87, cysteine 56-cysteine 80, and cysteine 74-cysteine 85. The segment at 104–116 is important for membrane-damaging activities in eukaryotes and bacteria; heparin-binding; it reads KKYRIYPNFLCRG.

It belongs to the phospholipase A2 family. Group II subfamily. S49 sub-subfamily. As to quaternary structure, monomer. As to expression, expressed by the venom gland.

Its subcellular location is the secreted. Functionally, snake venom phospholipase A2 homolog that lacks enzymatic activity. Shows high myotoxin activities and displays edema-inducing activities. Has cytotoxic activities against HUVEC cells (LC(50)=2.5 uL) and human lung adenocarcinoma A549 cells (LC(50)=2.9 uL). The sequence is that of Phospholipase A2 homolog EPL_00195 from Echis pyramidum leakeyi (Leakey's carpet viper).